The primary structure comprises 112 residues: SPbeta prophage-derived uncharacterized protein YoqB (112 aa).

This Bacillus subtilis (strain 168) protein is SPbeta prophage-derived uncharacterized protein YoqB (yoqB).